The following is a 241-amino-acid chain: Small ribosomal subunit protein uS2 (241 aa).

The protein belongs to the universal ribosomal protein uS2 family.

In Citrobacter koseri (strain ATCC BAA-895 / CDC 4225-83 / SGSC4696), this protein is Small ribosomal subunit protein uS2.